We begin with the raw amino-acid sequence, 445 residues long: Phosphoglucosamine mutase (445 aa).

Residue Ser99 is the Phosphoserine intermediate of the active site. Mg(2+)-binding residues include Ser99, Asp242, Asp244, and Asp246. A Phosphoserine modification is found at Ser99.

The protein belongs to the phosphohexose mutase family. The cofactor is Mg(2+). In terms of processing, activated by phosphorylation.

It carries out the reaction alpha-D-glucosamine 1-phosphate = D-glucosamine 6-phosphate. In terms of biological role, catalyzes the conversion of glucosamine-6-phosphate to glucosamine-1-phosphate. This chain is Phosphoglucosamine mutase, found in Helicobacter pylori (strain Shi470).